The primary structure comprises 310 residues: tRNA dimethylallyltransferase (310 aa).

ATP is bound at residue 13–20; sequence GPTASGKT. 15–20 provides a ligand contact to substrate; that stretch reads TASGKT. 4 interaction with substrate tRNA regions span residues 38–41, 162–166, 243–248, and 276–283; these read DSAL, QRLSR, RCVGYR, and KRQITWLR.

Belongs to the IPP transferase family. In terms of assembly, monomer. Mg(2+) serves as cofactor.

The enzyme catalyses adenosine(37) in tRNA + dimethylallyl diphosphate = N(6)-dimethylallyladenosine(37) in tRNA + diphosphate. In terms of biological role, catalyzes the transfer of a dimethylallyl group onto the adenine at position 37 in tRNAs that read codons beginning with uridine, leading to the formation of N6-(dimethylallyl)adenosine (i(6)A). The sequence is that of tRNA dimethylallyltransferase from Aliivibrio fischeri (strain MJ11) (Vibrio fischeri).